Here is a 249-residue protein sequence, read N- to C-terminus: MFEDLKPHLQELRKRLMVSVGTILVAFLGCFHFWKNIFEFVKNSYKGTLIQLSPIEGVMVAVKISFSAAIVISMPIIFWQLWLFIAPGLYKNEKKVILPFVFFGSGMFLMGAAFSYYVVFPFIIEYLATFGSDVFAANISASSYVSFFTRLILGFGVAFELPVLAYFLAKVGLITDASLKAYFKYAIVVIFIVAAIITPPDVVSQIFMALPLVGLYGLSILIAKMVNPAPKDNENDHENDAKEHTKSES.

6 helical membrane-spanning segments follow: residues 18–38 (VSVGTILVAFLGCFHFWKNIF), 69–89 (AIVISMPIIFWQLWLFIAPGL), 96–116 (VILPFVFFGSGMFLMGAAFSY), 151–171 (LILGFGVAFELPVLAYFLAKV), 187–207 (IVVIFIVAAIITPPDVVSQIF), and 208–228 (MALPLVGLYGLSILIAKMVNP).

Belongs to the TatC family. The Tat system comprises two distinct complexes: a TatABC complex, containing multiple copies of TatA, TatB and TatC subunits, and a separate TatA complex, containing only TatA subunits. Substrates initially bind to the TatABC complex, which probably triggers association of the separate TatA complex to form the active translocon.

It is found in the cell inner membrane. Its function is as follows. Part of the twin-arginine translocation (Tat) system that transports large folded proteins containing a characteristic twin-arginine motif in their signal peptide across membranes. Together with TatB, TatC is part of a receptor directly interacting with Tat signal peptides. This chain is Sec-independent protein translocase protein TatC, found in Helicobacter pylori (strain J99 / ATCC 700824) (Campylobacter pylori J99).